The primary structure comprises 181 residues: Adenine phosphoribosyltransferase (181 aa).

It belongs to the purine/pyrimidine phosphoribosyltransferase family. In terms of assembly, homodimer.

The protein resides in the cytoplasm. The enzyme catalyses AMP + diphosphate = 5-phospho-alpha-D-ribose 1-diphosphate + adenine. The protein operates within purine metabolism; AMP biosynthesis via salvage pathway; AMP from adenine: step 1/1. Functionally, catalyzes a salvage reaction resulting in the formation of AMP, that is energically less costly than de novo synthesis. The polypeptide is Adenine phosphoribosyltransferase (Aprt) (Drosophila pseudoobscura pseudoobscura (Fruit fly)).